A 117-amino-acid chain; its full sequence is Large ribosomal subunit protein bL20c (117 aa).

Belongs to the bacterial ribosomal protein bL20 family.

It is found in the plastid. It localises to the chloroplast. In terms of biological role, binds directly to 23S ribosomal RNA and is necessary for the in vitro assembly process of the 50S ribosomal subunit. It is not involved in the protein synthesizing functions of that subunit. The polypeptide is Large ribosomal subunit protein bL20c (Manihot esculenta (Cassava)).